A 468-amino-acid polypeptide reads, in one-letter code: MGTQEGWCLLLCLALSGAAETKPHPAEGQWRAVDVVLDCFLAKDGAHRGALASSEDRARASLVLKQVPVLDDGSLEDFTDFQGGTLAQDDPPIIFEASVDLVQIPQAEALLHADCSGKEVTCEISRYFLQMTETTVKTAAWFMANMQVSGGGPSISLVMKTPRVTKNEALWHPTLNLPLSPQGTVRTAVEFQVMTQTQSLSFLLGSSASLDCGFSMAPGLDLISVEWRLQHKGRGQLVYSWTAGQGQAVRKGATLEPAQLGMARDASLTLPGLTIQDEGTYICQITTSLYRAQQIIQLNIQASPKVRLSLANEALLPTLICDIAGYYPLDVVVTWTREELGGSPAQVSGASFSSLRQSVAGTYSISSSLTAEPGSAGATYTCQVTHISLEEPLGASTQVVPPERRTALGVIFASSLFLLALMFLGLQRRQAPTGLGLLQAERWETTSCADTQSSHLHEDRTARVSQPS.

The signal sequence occupies residues 1–18; it reads MGTQEGWCLLLCLALSGA. Over 19 to 405 the chain is Lumenal; the sequence is AETKPHPAEG…STQVVPPERR (387 aa). The 117-residue stretch at 181–297 folds into the Ig-like V-type domain; sequence PQGTVRTAVE…SLYRAQQIIQ (117 aa). 2 disulfide bridges follow: cysteine 212-cysteine 283 and cysteine 321-cysteine 382. The 91-residue stretch at 304 to 394 folds into the Ig-like C1-type domain; the sequence is PKVRLSLANE…THISLEEPLG (91 aa). A helical transmembrane segment spans residues 406-426; sequence TALGVIFASSLFLLALMFLGL. The Cytoplasmic segment spans residues 427 to 468; sequence QRRQAPTGLGLLQAERWETTSCADTQSSHLHEDRTARVSQPS. A disordered region spans residues 449-468; it reads ADTQSSHLHEDRTARVSQPS.

In terms of assembly, interacts with peptide-free HLA-A*02-B2M complexes or those loaded with low affinity peptides, likely facilitating peptide exchange onto higher affinity peptides. Interacts with MR1 in a ligand-independent way; this interaction may stabilize MR1 pool and facilitate ligand loading and dissociation.

It localises to the cell membrane. It is found in the endoplasmic reticulum membrane. Its subcellular location is the microsome membrane. The protein localises to the golgi apparatus membrane. Its function is as follows. Component of the antigen processing and presentation pathway, which binds to MHC class I coupled with beta2-microglobulin/B2M. Association between TAPBPR and MHC class I occurs in the absence of a functional peptide-loading complex (PLC). The chain is Tapasin-related protein (TAPBPL) from Homo sapiens (Human).